The chain runs to 1024 residues: Seizure 6-like protein (1024 aa).

An N-terminal signal peptide occupies residues 1 to 28 (MPAARPPAAGLRGISLFLALLLGSPAAA). The Extracellular portion of the chain corresponds to 29 to 958 (LERDALPEGD…ETSLEGGNMA (930 aa)). 3 disordered regions span residues 33–77 (ALPE…SQSA), 108–184 (RPKH…EVPL), and 212–234 (AHTL…EAPQ). O-linked (GalNAc...) serine glycosylation is present at Ser49. Basic and acidic residues predominate over residues 56–66 (SPGKEHPEERV). Over residues 110 to 120 (KHALPPKKKLP) the composition is skewed to basic residues. Polar residues predominate over residues 138 to 162 (SAATVQRAGSQPASQGLDLLSSSTE). O-glycosylated at one site regions lie at residues 147–161 (SQPA…SSST) and 176–180 (SEEAS). Cysteines 281 and 308 form a disulfide. Residues 281 to 389 (CSVSFSNPEG…GTFQLHYQAF (109 aa)) form the CUB 1 domain. N-linked (GlcNAc...) asparagine glycans are attached at residues Asn311, Asn328, and Asn350. Positions 391 to 450 (LSCNFPRRPDSGDVTVMDLHSGGVAHFHCHLGYELQGAKMLTCINASKPHWSSQEPICSA) constitute a Sushi 1 domain. 2 disulfides stabilise this stretch: Cys393/Cys433 and Cys419/Cys448. 8 N-linked (GlcNAc...) asparagine glycosylation sites follow: Asn435, Asn458, Asn474, Asn514, Asn576, Asn618, Asn674, and Asn742. The CUB 2 domain occupies 452 to 562 (CGGAVHNATI…STFNIRFEAF (111 aa)). The 62-residue stretch at 565 to 626 (GHCYEPYIQN…WNDTEPLCRA (62 aa)) folds into the Sushi 2 domain. 2 cysteine pairs are disulfide-bonded: Cys567–Cys609 and Cys594–Cys624. A CUB 3 domain is found at 628–739 (CGGELSAVAG…QGFIMNYIEV (112 aa)). 3 Sushi domains span residues 743 to 802 (DSCS…FCEK), 804 to 867 (MYCT…HCVS), and 871 to 932 (LACD…VCKV). 6 disulfide bridges follow: Cys745–Cys787, Cys773–Cys800, Cys806–Cys848, Cys834–Cys865, Cys873–Cys915, and Cys901–Cys930. A helical membrane pass occupies residues 959–979 (LAIFIPVLIISLLLGGAYIYI). Over 980-1024 (TRCRYYSNLRLPLMYSHPYSQITVETEFDNPIYETGETREYEVSI) the chain is Cytoplasmic.

This sequence belongs to the SEZ6 family. Post-translationally, O-glycosylated. As to expression, widely expressed, including adult and fetal brains and lungs. Not expressed in all lung cancer cell lines.

It localises to the endoplasmic reticulum membrane. Functionally, may contribute to specialized endoplasmic reticulum functions in neurons. The chain is Seizure 6-like protein (SEZ6L) from Homo sapiens (Human).